Consider the following 85-residue polypeptide: Large ribosomal subunit protein eL34 (85 aa).

This sequence belongs to the eukaryotic ribosomal protein eL34 family.

The chain is Large ribosomal subunit protein eL34 from Saccharolobus islandicus (strain M.16.27) (Sulfolobus islandicus).